A 1025-amino-acid polypeptide reads, in one-letter code: MSEGKSPAKKRARRSLSISKTKKNECNSIISFFNNVPPAKLACPICSKMVPRYDLNWHLDEKCANNDNITPVDLRHVGFTDSSGSTVNLTNTVLENVTPGKLSPSKASLTPDPSDSAKMGIKQQTSPYFKNNKDLVFKNQDKLRHHNVKVITLGSLSSKLSRRYTEARRSICKKNEEFASKSPQSPSSTVVRSPVDNCSEIEDKDQILENSSQKENVFTCDSLNEQRTEHSVEDTKVLEAESQEATQECGRSPLTPAFSDNAFVLFSPDLTRGNPLRSTSEDSLEWETITGIDGKDVEKCEAGSCEEVKVTVASEAKTQLSDWEAKCHSSTPDDSKGCNIQDLLLEGDSDLKNEITCRIPLEQGSSCDVPDKTVTVPPSHPYYLRSFLVVLKAVFENEEDRMLFDEHEKEIVTKFYQLSASAQKLYVRLFQRKFSWLKMNKLEYEEIAPDLTPVIGELQQAGFLQTESELQELSEVLELLSAPELKTLAKTFHLVNPNGQKQQLVDTFLKLAKQPSVCTWGKNQPGIGAVILKRAKGLAGQALRVCKGPRAVFSRVLLLFSLTDSLEDEEAACGGQGQLSTVLLVNLGRMEFPRYTINRKTQIFQDRDDLIRYAAAAHMLSDISTAMANGNWKEANELSQCAKSDWNKLKSHPSLRYHENLPLFLRCFTVGWIYTRILSRTVEILQRLHMYEEAVKELESLLSQRVYCPDSRGRWWDRLALNLHQHLKRLEPAIKCITEGLADPEVRTGHRLSLYQRALRLRESPSCQKYRHLFHQLPEVTVGDVKHVTITGRLCPQRGMGKSVFVMEAGGPTAPATVLCSVEEVALAYYRRSGFDQGIHGEGSTFSTLYGLLLWDIIFMDGIPDVFRNAYQASPLDLCTDSFFASRGPAIEARLQRIHSAPAESLRAWVAAAWQAQEGRVASIVSWDRFASLQQAQDLVSCLGGPVLSGVCRRLAADFRHCRGGLPDLVVWNSQSRHFKLVEVKGPNDRLSHKQMLWLDELQKLGADVEVCHVVAVGAKSKSLT.

The UBZ4-type zinc-finger motif lies at 40–68 (KLACPICSKMVPRYDLNWHLDEKCANNDN). Positions 43, 46, 58, and 63 each coordinate Zn(2+). Residues 98–120 (TPGKLSPSKASLTPDPSDSAKMG) form a disordered region. Serine 182 is subject to Phosphoserine. Positions 682 to 704 (VEILQRLHMYEEAVKELESLLSQ) form a coiled coil. Mn(2+)-binding residues include glutamate 842, aspartate 968, glutamate 983, and valine 984. The VRR-NUC domain maps to 903-1015 (AESLRAWVAA…GADVEVCHVV (113 aa)).

It belongs to the FAN1 family. In terms of assembly, interacts with FANCD2 (when monoubiquitinated). Interacts with FANCI, MLH1, MLH3 and PMS2. Mn(2+) is required as a cofactor. Mg(2+) serves as cofactor. Post-translationally, ubiquitinated and degraded during mitotic exit by the APC/C-Cdh1 complex.

Its subcellular location is the nucleus. It carries out the reaction Hydrolytically removes 5'-nucleotides successively from the 3'-hydroxy termini of 3'-hydroxy-terminated oligonucleotides.. Its function is as follows. Nuclease required for the repair of DNA interstrand cross-links (ICL) recruited at sites of DNA damage by monoubiquitinated FANCD2. Specifically involved in repair of ICL-induced DNA breaks by being required for efficient homologous recombination, probably in the resolution of homologous recombination intermediates. Not involved in DNA double-strand breaks resection. Acts as a 5'-3' exonuclease that anchors at a cut end of DNA and cleaves DNA successively at every third nucleotide, allowing to excise an ICL from one strand through flanking incisions. Probably keeps excising with 3'-flap annealing until it reaches and unhooks the ICL. Acts at sites that have a 5'-terminal phosphate anchor at a nick or a 1- or 2-nucleotide flap and is augmented by a 3' flap. Also has endonuclease activity toward 5'-flaps. This Ailuropoda melanoleuca (Giant panda) protein is Fanconi-associated nuclease 1 (FAN1).